A 649-amino-acid polypeptide reads, in one-letter code: FAS-associated factor 1 (649 aa).

A UBA domain is found at 1–57 (MASNMDREMILADFQACTGIENIDEAITLLEQNNWDLVAAINGVIPQENGILQSDFG). Residues 55 to 84 (DFGGETMPGPTFDPASPPAPAPAPSSSAFR) are disordered. Ser-319 carries the post-translational modification Phosphoserine. The UBX domain maps to 568–645 (NAEPVSKLRI…NLFPQETLFL (78 aa)). Position 579 is a phosphothreonine (Thr-579). The residue at position 581 (Ser-581) is a Phosphoserine.

In terms of assembly, interacts with CDT1 and ATPase VCP/p97. Interacts (via UBA domain) with FAS (via death domain). Interacts (via UBA domain) with NLRP12 (via DAPIN/PYRIN domain). Central nervous system.

It is found in the nucleus. Its function is as follows. Ubiquitin-binding protein. Required for the progression of DNA replication forks by targeting DNA replication licensing factor CDT1 for degradation. Potentiates but cannot initiate FAS-induced apoptosis. This Rattus norvegicus (Rat) protein is FAS-associated factor 1 (Faf1).